Here is a 275-residue protein sequence, read N- to C-terminus: NADPH-dependent 7-cyano-7-deazaguanine reductase (275 aa).

A substrate-binding site is contributed by 81–83 (IES). Position 83-84 (83-84 (SK)) interacts with NADPH. The active-site Thioimide intermediate is Cys181. The active-site Proton donor is Asp188. 220–221 (HE) provides a ligand contact to substrate. Residue 249-250 (RG) coordinates NADPH.

Belongs to the GTP cyclohydrolase I family. QueF type 2 subfamily. As to quaternary structure, homodimer.

It localises to the cytoplasm. It catalyses the reaction 7-aminomethyl-7-carbaguanine + 2 NADP(+) = 7-cyano-7-deazaguanine + 2 NADPH + 3 H(+). Its pathway is tRNA modification; tRNA-queuosine biosynthesis. Its function is as follows. Catalyzes the NADPH-dependent reduction of 7-cyano-7-deazaguanine (preQ0) to 7-aminomethyl-7-deazaguanine (preQ1). The sequence is that of NADPH-dependent 7-cyano-7-deazaguanine reductase from Xylella fastidiosa (strain M12).